We begin with the raw amino-acid sequence, 74 residues long: UPF0435 protein GTNG_0390 (74 aa).

It belongs to the UPF0435 family.

The protein is UPF0435 protein GTNG_0390 of Geobacillus thermodenitrificans (strain NG80-2).